The chain runs to 229 residues: Cytidylate kinase (229 aa).

12 to 20 (GPSGSGKGT) is a binding site for ATP.

It belongs to the cytidylate kinase family. Type 1 subfamily.

The protein resides in the cytoplasm. The catalysed reaction is CMP + ATP = CDP + ADP. It catalyses the reaction dCMP + ATP = dCDP + ADP. The protein is Cytidylate kinase of Azotobacter vinelandii (strain DJ / ATCC BAA-1303).